Consider the following 328-residue polypeptide: Malate dehydrogenase (328 aa).

12–18 (GAAGQIG) provides a ligand contact to NAD(+). Substrate is bound by residues arginine 93 and arginine 99. Residues asparagine 106, glutamine 113, and 130 to 132 (VGN) contribute to the NAD(+) site. 2 residues coordinate substrate: asparagine 132 and arginine 163. Histidine 188 serves as the catalytic Proton acceptor.

The protein belongs to the LDH/MDH superfamily. MDH type 2 family.

The catalysed reaction is (S)-malate + NAD(+) = oxaloacetate + NADH + H(+). Functionally, catalyzes the reversible oxidation of malate to oxaloacetate. The sequence is that of Malate dehydrogenase from Saccharopolyspora erythraea (strain ATCC 11635 / DSM 40517 / JCM 4748 / NBRC 13426 / NCIMB 8594 / NRRL 2338).